The primary structure comprises 431 residues: Mothers against decapentaplegic homolog 6 (431 aa).

Over residues 1–15 the composition is skewed to basic residues; that stretch reads MFRSKRSGLVRRLWR. The segment at 1 to 95 is disordered; the sequence is MFRSKRSGLV…SPPGPGGGEA (95 aa). A compositionally biased stretch (polar residues) spans 29–38; the sequence is GQSSERNATA. Positions 71 to 90 are enriched in pro residues; that stretch reads PELPPPPPPPPPGGASPPGP. Residues 85-209 enclose the MH1 domain; it reads ASPPGPGGGE…FSRLCGPESP (125 aa). Positions 139, 182, 194, and 199 each coordinate Zn(2+). The span at 235–245 shows a compositional bias: polar residues; sequence TETEATNSPNV. Residues 235 to 258 are disordered; sequence TETEATNSPNVTPGEFSDASTSPD. Residues 265-431 form the MH2 domain; that stretch reads WCNVAYWEHR…WLEILLSNNR (167 aa).

Belongs to the dwarfin/SMAD family. As to expression, developing heart, eyes and limbs.

The protein localises to the nucleus. Its function is as follows. Transforming growth factor-beta superfamily receptors signaling occurs through the Smad family of intracellular mediators. SMAD6 is an inhibitory Smad (i-Smad) that negatively regulates signaling downstream of type I transforming growth factor-beta. Acts as a mediator of TGF-beta and BMP anti-inflammatory activities. Suppresses IL1R-TLR signaling through its direct interaction with PEL1, preventing NF-kappa-B activation, nuclear transport and NF-kappa-B-mediated expression of pro-inflammatory genes. Blocks the BMP-SMAD1 signaling pathway by competing with SMAD4 for receptor-activated SMAD1-binding. Binds to regulatory elements in target promoter regions. This Gallus gallus (Chicken) protein is Mothers against decapentaplegic homolog 6 (SMAD6).